A 118-amino-acid polypeptide reads, in one-letter code: Large ribosomal subunit protein bL20 (118 aa).

It belongs to the bacterial ribosomal protein bL20 family.

Functionally, binds directly to 23S ribosomal RNA and is necessary for the in vitro assembly process of the 50S ribosomal subunit. It is not involved in the protein synthesizing functions of that subunit. In Pseudomonas fluorescens (strain SBW25), this protein is Large ribosomal subunit protein bL20.